A 215-amino-acid polypeptide reads, in one-letter code: Cytochrome b6 (215 aa).

Residues 32-52 (IFYCFGGITFTCFLVQVATGF) form a helical membrane-spanning segment. Cys35 contributes to the heme c binding site. Positions 86 and 100 each coordinate heme b. A run of 3 helical transmembrane segments spans residues 90–110 (ASMM…TGGF), 116–136 (LTWV…VTGY), and 186–206 (LHTF…FLMI). Heme b contacts are provided by His187 and His202.

It belongs to the cytochrome b family. PetB subfamily. As to quaternary structure, the 4 large subunits of the cytochrome b6-f complex are cytochrome b6, subunit IV (17 kDa polypeptide, PetD), cytochrome f and the Rieske protein, while the 4 small subunits are PetG, PetL, PetM and PetN. The complex functions as a dimer. It depends on heme b as a cofactor. Requires heme c as cofactor.

The protein localises to the plastid. It is found in the chloroplast thylakoid membrane. In terms of biological role, component of the cytochrome b6-f complex, which mediates electron transfer between photosystem II (PSII) and photosystem I (PSI), cyclic electron flow around PSI, and state transitions. The protein is Cytochrome b6 of Auxenochlorella protothecoides (Green microalga).